We begin with the raw amino-acid sequence, 398 residues long: Phosphoglycerate kinase (398 aa).

Residues 20–22 (DLN), Arg35, 58–61 (HLGR), Arg118, and Arg155 each bind substrate. ATP is bound by residues Lys206, Gly295, Glu326, and 354–357 (GGDS).

Belongs to the phosphoglycerate kinase family. As to quaternary structure, monomer.

It is found in the cytoplasm. The enzyme catalyses (2R)-3-phosphoglycerate + ATP = (2R)-3-phospho-glyceroyl phosphate + ADP. Its pathway is carbohydrate degradation; glycolysis; pyruvate from D-glyceraldehyde 3-phosphate: step 2/5. The sequence is that of Phosphoglycerate kinase from Onion yellows phytoplasma (strain OY-M).